Consider the following 265-residue polypeptide: Cytochrome c oxidase subunit 3 (265 aa).

The next 7 membrane-spanning stretches (helical) occupy residues 16 to 36 (PWPISGSLGALATTVGGVMYM), 41 to 61 (GGATLLSLGLIFLLYTMFVWW), 84 to 104 (YGSILFIVSEVMFLFAFFWAS), 137 to 157 (TPILLSSGAAVTWAHHAILAG), 162 to 182 (AVYALVATVSLAIVFTGFQGM), 200 to 220 (FYLATGFHGFHVIIGTLFSII), and 245 to 265 (WHFVDVVRLFLFVSIYWWGGI).

It belongs to the cytochrome c oxidase subunit 3 family. As to quaternary structure, component of the cytochrome c oxidase (complex IV, CIV), a multisubunit enzyme composed of a catalytic core of 3 subunits and several supernumerary subunits. The complex exists as a monomer or a dimer and forms supercomplexes (SCs) in the inner mitochondrial membrane with ubiquinol-cytochrome c oxidoreductase (cytochrome b-c1 complex, complex III, CIII).

The protein resides in the mitochondrion inner membrane. It catalyses the reaction 4 Fe(II)-[cytochrome c] + O2 + 8 H(+)(in) = 4 Fe(III)-[cytochrome c] + 2 H2O + 4 H(+)(out). In terms of biological role, component of the cytochrome c oxidase, the last enzyme in the mitochondrial electron transport chain which drives oxidative phosphorylation. The respiratory chain contains 3 multisubunit complexes succinate dehydrogenase (complex II, CII), ubiquinol-cytochrome c oxidoreductase (cytochrome b-c1 complex, complex III, CIII) and cytochrome c oxidase (complex IV, CIV), that cooperate to transfer electrons derived from NADH and succinate to molecular oxygen, creating an electrochemical gradient over the inner membrane that drives transmembrane transport and the ATP synthase. Cytochrome c oxidase is the component of the respiratory chain that catalyzes the reduction of oxygen to water. Electrons originating from reduced cytochrome c in the intermembrane space (IMS) are transferred via the dinuclear copper A center (CU(A)) of subunit 2 and heme A of subunit 1 to the active site in subunit 1, a binuclear center (BNC) formed by heme A3 and copper B (CU(B)). The BNC reduces molecular oxygen to 2 water molecules using 4 electrons from cytochrome c in the IMS and 4 protons from the mitochondrial matrix. This chain is Cytochrome c oxidase subunit 3 (COX3), found in Oenothera berteroana (Bertero's evening primrose).